A 182-amino-acid chain; its full sequence is Transcription termination/antitermination protein NusG (182 aa).

It belongs to the NusG family.

Participates in transcription elongation, termination and antitermination. The polypeptide is Transcription termination/antitermination protein NusG (Chlamydia pneumoniae (Chlamydophila pneumoniae)).